Consider the following 233-residue polypeptide: Purine nucleoside phosphorylase DeoD-type (233 aa).

His-4 is an a purine D-ribonucleoside binding site. Residues Gly-20, Arg-24, Arg-43, and 87-90 (RVGT) each bind phosphate. A purine D-ribonucleoside-binding positions include 179–181 (EME) and 203–204 (SD). Asp-204 acts as the Proton donor in catalysis.

It belongs to the PNP/UDP phosphorylase family. As to quaternary structure, homohexamer; trimer of homodimers.

It catalyses the reaction a purine D-ribonucleoside + phosphate = a purine nucleobase + alpha-D-ribose 1-phosphate. The enzyme catalyses a purine 2'-deoxy-D-ribonucleoside + phosphate = a purine nucleobase + 2-deoxy-alpha-D-ribose 1-phosphate. Functionally, catalyzes the reversible phosphorolytic breakdown of the N-glycosidic bond in the beta-(deoxy)ribonucleoside molecules, with the formation of the corresponding free purine bases and pentose-1-phosphate. This chain is Purine nucleoside phosphorylase DeoD-type, found in Clostridium novyi (strain NT).